The sequence spans 237 residues: Cysteine-rich venom protein DIS2 (237 aa).

Residues 1–18 form the signal peptide; the sequence is MFVFILLSLAAVLQQSFG. The region spanning 37-165 is the SCP domain; the sequence is VDKHNAFRRS…SYNYFYVCQY (129 aa). 7 disulfides stabilise this stretch: C74–C152, C91–C166, C147–C163, C185–C192, C188–C197, C201–C234, and C219–C232. One can recognise a ShKT domain in the interval 201–234; the sequence is CSREDVFMNCKSLVAQSNCQDDYIRKNCPATCFC.

This sequence belongs to the CRISP family. As to expression, expressed by the venom gland.

The protein resides in the secreted. Its function is as follows. Weakly blocks contraction of smooth muscle elicited by high potassium-induced depolarization, but does not block caffeine-stimulated contraction. May target voltage-gated calcium channels on smooth muscle. The sequence is that of Cysteine-rich venom protein DIS2 from Dispholidus typus (Boomslang).